Consider the following 437-residue polypeptide: Diaminopimelate decarboxylase (437 aa).

Lys81 carries the post-translational modification N6-(pyridoxal phosphate)lysine. Pyridoxal 5'-phosphate-binding positions include Gly256 and 298–301; that span reads EPGR. Residues Arg301, Arg337, and Tyr341 each contribute to the substrate site. Cys366 serves as the catalytic Proton donor. The substrate site is built by Glu367 and Tyr396. A pyridoxal 5'-phosphate-binding site is contributed by Tyr396.

Belongs to the Orn/Lys/Arg decarboxylase class-II family. LysA subfamily. As to quaternary structure, homodimer. Pyridoxal 5'-phosphate serves as cofactor.

It catalyses the reaction meso-2,6-diaminopimelate + H(+) = L-lysine + CO2. Its pathway is amino-acid biosynthesis; L-lysine biosynthesis via DAP pathway; L-lysine from DL-2,6-diaminopimelate: step 1/1. Its function is as follows. Specifically catalyzes the decarboxylation of meso-diaminopimelate (meso-DAP) to L-lysine. The polypeptide is Diaminopimelate decarboxylase (Actinosynnema pretiosum subsp. auranticum).